The following is a 323-amino-acid chain: Mitochondrial glutamate carrier 1 (323 aa).

Solcar repeat units lie at residues 6–93 (ISLP…FRHQ), 101–214 (LTLP…LNQL), and 223–312 (SPFY…GIAE). 6 helical membrane-spanning segments follow: residues 12–32 (LING…IDLA), 62–82 (YFGM…EKAI), 107–127 (MLAG…MEML), 189–209 (GLGA…PLFA), 223–243 (SPFY…AVAV), and 292–312 (ALVI…GIAE).

The protein belongs to the mitochondrial carrier (TC 2.A.29) family.

The protein localises to the mitochondrion inner membrane. It catalyses the reaction L-glutamate(in) + H(+)(in) = L-glutamate(out) + H(+)(out). Mitochondrial glutamate/H(+) symporter. Responsible for the transport of glutamate from the cytosol into the mitochondrial matrix with the concomitant import of a proton. Plays a role in the control of glucose-stimulated insulin secretion. This Mus musculus (Mouse) protein is Mitochondrial glutamate carrier 1 (Slc25a22).